A 429-amino-acid chain; its full sequence is Phosphomethylpyrimidine synthase (429 aa).

Residues N66, M95, Y124, H163, 185–187 (SRG), 226–229 (DGLR), and E265 each bind substrate. H269 lines the Zn(2+) pocket. Y292 lines the substrate pocket. Zn(2+) is bound at residue H333. [4Fe-4S] cluster-binding residues include C407, C410, and C414.

Belongs to the ThiC family. [4Fe-4S] cluster serves as cofactor.

It carries out the reaction 5-amino-1-(5-phospho-beta-D-ribosyl)imidazole + S-adenosyl-L-methionine = 4-amino-2-methyl-5-(phosphooxymethyl)pyrimidine + CO + 5'-deoxyadenosine + formate + L-methionine + 3 H(+). It participates in cofactor biosynthesis; thiamine diphosphate biosynthesis. Functionally, catalyzes the synthesis of the hydroxymethylpyrimidine phosphate (HMP-P) moiety of thiamine from aminoimidazole ribotide (AIR) in a radical S-adenosyl-L-methionine (SAM)-dependent reaction. This is Phosphomethylpyrimidine synthase from Pyrococcus abyssi (strain GE5 / Orsay).